A 232-amino-acid polypeptide reads, in one-letter code: Large ribosomal subunit protein uL1 (232 aa).

This sequence belongs to the universal ribosomal protein uL1 family. Part of the 50S ribosomal subunit.

In terms of biological role, binds directly to 23S rRNA. The L1 stalk is quite mobile in the ribosome, and is involved in E site tRNA release. Functionally, protein L1 is also a translational repressor protein, it controls the translation of the L11 operon by binding to its mRNA. The polypeptide is Large ribosomal subunit protein uL1 (Sinorhizobium medicae (strain WSM419) (Ensifer medicae)).